We begin with the raw amino-acid sequence, 377 residues long: Pseudouridylate synthase RPUSD4, mitochondrial (377 aa).

The N-terminal 35 residues, 1-35 (MAAPLLGSPGLQVLSMSSRTGKLFTPSSRSFCSRA), are a transit peptide targeting the mitochondrion. Aspartate 153 is a catalytic residue.

The protein belongs to the pseudouridine synthase RluA family. As to quaternary structure, interacts with 16S mt-rRNA, mt-tRNA(Phe) and mt-tRNA(Met). Forms a regulatory protein-RNA complex, consisting of RCC1L, NGRN, RPUSD3, RPUSD4, TRUB2, FASTKD2 and 16S mt-rRNA.

The protein localises to the mitochondrion matrix. The protein resides in the nucleus. It localises to the cytoplasm. The catalysed reaction is uridine in 5S rRNA = pseudouridine in 5S rRNA. It catalyses the reaction a uridine in tRNA = a pseudouridine in tRNA. It carries out the reaction a uridine in mRNA = a pseudouridine in mRNA. Its function is as follows. Catalyzes uridine to pseudouridine isomerization (pseudouridylation) of different mitochondrial RNA substrates. Acts on position 1397 in 16S mitochondrial ribosomal RNA (16S mt-rRNA). This modification is required for the assembly of 16S mt-rRNA into a functional mitochondrial ribosome. As a component of a functional protein-RNA module, consisting of RCC1L, NGRN, RPUSD3, RPUSD4, TRUB2, FASTKD2 and 16S mt-rRNA, controls 16S mt-rRNA abundance and is required for intra-mitochondrial translation. Acts on position 39 in mitochondrial tRNA(Phe). Also catalyzes pseudouridylation of mRNAs in nucleus: acts as a regulator of pre-mRNA splicing by mediating pseudouridylation of pre-mRNAs at locations associated with alternatively spliced regions. Pseudouridylation of pre-mRNAs near splice sites directly regulates mRNA splicing and mRNA 3'-end processing. This Rattus norvegicus (Rat) protein is Pseudouridylate synthase RPUSD4, mitochondrial.